A 289-amino-acid polypeptide reads, in one-letter code: Pseudouridine-5'-phosphate glycosidase (289 aa).

Glu10 (proton donor) is an active-site residue. Positions 71 and 91 each coordinate substrate. Mn(2+) is bound at residue Asp121. Residue 123 to 125 (SQD) coordinates substrate. Lys142 (nucleophile) is an active-site residue.

It belongs to the pseudouridine-5'-phosphate glycosidase family. In terms of assembly, homotrimer. Mn(2+) serves as cofactor.

The catalysed reaction is D-ribose 5-phosphate + uracil = psi-UMP + H2O. Functionally, catalyzes the reversible cleavage of pseudouridine 5'-phosphate (PsiMP) to ribose 5-phosphate and uracil. Functions biologically in the cleavage direction, as part of a pseudouridine degradation pathway. This chain is Pseudouridine-5'-phosphate glycosidase, found in Kosmotoga olearia (strain ATCC BAA-1733 / DSM 21960 / TBF 19.5.1).